Consider the following 55-residue polypeptide: MKIIVFLAVLMLVSAQVCLVSAAEMEHSSDNELSSRDLVKRFFLPPCAHKGTCNH.

A signal peptide spans 1–15; the sequence is MKIIVFLAVLMLVSA. A propeptide spanning residues 16 to 41 is cleaved from the precursor; that stretch reads QVCLVSAAEMEHSSDNELSSRDLVKR. A disulfide bridge connects residues C47 and C53. The propeptide occupies 54-55; it reads NH.

In terms of tissue distribution, expressed by the skin glands.

It is found in the secreted. This is Riparin-1.5 acid from Crinia riparia (Streambank froglet).